The primary structure comprises 635 residues: Signal recognition particle subunit SRP72 (635 aa).

7 TPR repeats span residues 7–42 (GGLY…YPKE), 75–105 (GHVG…DKDD), 106–139 (VKAL…HSDD), 171–204 (YSQL…CRKS), 220–253 (DSIR…NHPD), 255–290 (SVKA…DQTK), and 436–469 (VEVE…QCRL). Residues 539–635 (KRKRKIRLPK…QKKKKNASKF (97 aa)) are disordered. A compositionally biased stretch (basic and acidic residues) spans 557-569 (DPERWLPRQERST). Residues 625–635 (KQKKKKNASKF) show a composition bias toward basic residues.

The protein belongs to the SRP72 family. In terms of assembly, heterodimer with srpa-68. Srpa-68-srpa-72 heterodimer formation is stabilized by the presence of 7SL RNA. Component of a signal recognition particle (SRP) complex that consists of a 7SL RNA molecule of 300 nucleotides and six protein subunits: srpa-72, srpa-68, SRP54, F37F2.2/SRP19, F25G6.8/SRP14 and ZK512.4/SRP9. Within the SRP complex, interacts (via N-terminus) with srpa-68 (via C-terminus).

It is found in the cytoplasm. The protein localises to the endoplasmic reticulum. Functionally, component of the signal recognition particle (SRP) complex, a ribonucleoprotein complex that mediates the cotranslational targeting of secretory and membrane proteins to the endoplasmic reticulum (ER). The SRP complex interacts with the signal sequence in nascent secretory and membrane proteins and directs them to the membrane of the ER. The SRP complex targets the ribosome-nascent chain complex to the SRP receptor (SR), which is anchored in the ER, where SR compaction and GTPase rearrangement drive cotranslational protein translocation into the ER. Binds the signal recognition particle RNA (7SL RNA) in presence of srpa-68. Can bind 7SL RNA with low affinity. The SRP complex possibly participates in the elongation arrest function. This is Signal recognition particle subunit SRP72 from Caenorhabditis elegans.